Here is a 122-residue protein sequence, read N- to C-terminus: Urease subunit beta (122 aa).

Positions 92–122 (GLRPEYAGELDGRGHEPTAPNYGEKGQGHFE) are disordered.

The protein belongs to the urease beta subunit family. As to quaternary structure, heterotrimer of UreA (gamma), UreB (beta) and UreC (alpha) subunits. Three heterotrimers associate to form the active enzyme.

Its subcellular location is the cytoplasm. It catalyses the reaction urea + 2 H2O + H(+) = hydrogencarbonate + 2 NH4(+). It participates in nitrogen metabolism; urea degradation; CO(2) and NH(3) from urea (urease route): step 1/1. This chain is Urease subunit beta, found in Saccharopolyspora erythraea (strain ATCC 11635 / DSM 40517 / JCM 4748 / NBRC 13426 / NCIMB 8594 / NRRL 2338).